A 362-amino-acid polypeptide reads, in one-letter code: Apelin receptor A (362 aa).

Residues 1–34 (MEPTSEYTETYDYYDTGYNDSGCDYSEWEPSYSL) are Extracellular-facing. The N-linked (GlcNAc...) asparagine glycan is linked to N19. Cystine bridges form between C23-C286 and C105-C184. The chain crosses the membrane as a helical span at residues 35 to 55 (IPVLYMLIFILGLSGNGVVIF). The Cytoplasmic portion of the chain corresponds to 56 to 73 (TVWRAKSKRRAADVYIGN). The helical transmembrane segment at 74-94 (LALADLTFVITLPLWAVYTAL) threads the bilayer. Residues 95–106 (GYHWPFGVALCK) lie on the Extracellular side of the membrane. The helical transmembrane segment at 107–127 (ISSYVVLVNMYASVFCLTCLS) threads the bilayer. Topologically, residues 128 to 149 (FDRYLAIVHSLSSGRLRSRATM) are cytoplasmic. Residues 150–170 (LASLGAIWFLSCLLAVPTLLF) traverse the membrane as a helical segment. Residues 171–211 (RTTVDDTGSNRTTCAMDFSLVTLNQDHESLWIAGLSLSSSA) are Extracellular-facing. N-linked (GlcNAc...) asparagine glycosylation occurs at N180. The chain crosses the membrane as a helical span at residues 212–232 (LGFLLPFLAMTVCYCFIGCTV). Over 233 to 248 (TRHFSHLRKEDQKKRR) the chain is Cytoplasmic. Residues 249–269 (LLKIITTLVVVFAFCWTPFHV) traverse the membrane as a helical segment. Over 270–284 (LKSMDALSYLDLAPN) the chain is Extracellular. Residues 285–305 (SCGFLHFLLLAHPYATCLAYV) form a helical membrane-spanning segment. Topologically, residues 306 to 362 (NSCLNPFLYAFFDLRFRSQCLCLLNLKKAMHGHMSSMSSTLSAQTQKSEVQSLATKV) are cytoplasmic.

Belongs to the G-protein coupled receptor 1 family. As to expression, first expressed before epiboly in dorsal precursors. During epiboly, expressed in the enveloping layer, yolk syncytial layer and migrating mesendoderm. During segmentation stages, expressed in epithelial structures such as adaxial cells, border cells of the newly formed somites, developing lens, otic vesicles and venous vasculature.

The protein localises to the cell membrane. Its function is as follows. G protein-coupled receptor for peptide hormones apelin (apln) and apelin receptor early endogenous ligand (apela), that plays a role in the regulation of normal cardiovascular function and fluid homeostasis. When acting as apelin receptor, activates both G(i) protein pathway that inhibits adenylate cyclase activity, and the beta-arrestin pathway that promotes internalization of the receptor. Also functions as mechanoreceptor that is activated by pathological stimuli in a G-protein-independent fashion to induce beta-arrestin signaling, hence eliciting cardiac hypertrophy. However, the presence of apelin ligand blunts cardiac hypertrophic induction from APLNR/APJ on response to pathological stimuli. Plays a key role in early development such as gastrulation, blood vessels formation and heart morphogenesis by acting as a receptor for apela hormone, promoting endoderm and mesendoderm cell migration and regulating the migration of cells fated to become myocardial progenitors, respectively. Positively regulates angioblast migration toward the embryonic midline, i.e. the position of the future vessel formation, during vasculogenesis. May promote sinus venosus (SV)-derived endothelial cells migration into the developing heart to promote coronary blood vessel development. Required for cardiovascular development, particularly for intersomitic vein angiogenesis by acting as a receptor for apln hormone. Also plays a role in various processes in adults such as regulation of blood vessel formation, blood pressure, heart contractility, and heart failure. Acts redundantly with agtrl1b in heart development. This Danio rerio (Zebrafish) protein is Apelin receptor A (aplnra).